The following is a 214-amino-acid chain: Urease accessory protein UreG (214 aa).

Residue 23 to 30 (GPVGSGKT) participates in GTP binding.

The protein belongs to the SIMIBI class G3E GTPase family. UreG subfamily. As to quaternary structure, homodimer. UreD, UreF and UreG form a complex that acts as a GTP-hydrolysis-dependent molecular chaperone, activating the urease apoprotein by helping to assemble the nickel containing metallocenter of UreC. The UreE protein probably delivers the nickel.

The protein localises to the cytoplasm. Facilitates the functional incorporation of the urease nickel metallocenter. This process requires GTP hydrolysis, probably effectuated by UreG. This chain is Urease accessory protein UreG, found in Bordetella bronchiseptica (strain ATCC BAA-588 / NCTC 13252 / RB50) (Alcaligenes bronchisepticus).